Consider the following 394-residue polypeptide: Putative pectate lyase 17 (394 aa).

A signal peptide spans 1–22 (MTHFTVSCLLVALFLCQSLVHA). Residues aspartate 192, aspartate 216, and aspartate 220 each coordinate Ca(2+). Arginine 272 is an active-site residue.

The protein belongs to the polysaccharide lyase 1 family. It depends on Ca(2+) as a cofactor.

The enzyme catalyses Eliminative cleavage of (1-&gt;4)-alpha-D-galacturonan to give oligosaccharides with 4-deoxy-alpha-D-galact-4-enuronosyl groups at their non-reducing ends.. The protein operates within glycan metabolism; pectin degradation; 2-dehydro-3-deoxy-D-gluconate from pectin: step 2/5. In Arabidopsis thaliana (Mouse-ear cress), this protein is Putative pectate lyase 17.